Consider the following 469-residue polypeptide: Phenolic glucoside malonyltransferase 1 (469 aa).

An N-acetylmethionine modification is found at Met1. The Proton acceptor role is filled by His169. The HXXXD motif motif lies at 169–173 (HAVLD). 291-292 (ST) is a binding site for malonyl-CoA. Asp413 serves as the catalytic Proton acceptor. The DFGWG motif signature appears at 413–417 (DFGWG).

Belongs to the plant acyltransferase family. Phenolic glucoside malonyltransferase subfamily.

It catalyses the reaction a flavonol 3-O-beta-D-glucoside + malonyl-CoA = a flavonol 3-O-(6-O-malonyl-beta-D-glucoside) + CoA. The catalysed reaction is a flavonol 7-O-beta-D-glucoside + malonyl-CoA = a flavonol 7-O-(6-O-malonyl-beta-D-glucoside) + CoA. In terms of biological role, malonyltransferase acting on xenobiotic glucosides. Has activity toward 2-Naphthol glucoside (2NAG), 1-Naphthol glucoside (1NAG), kaempferol 7-O-glucoside, kaempferol 3-O-glucoside, hydroxycoumarin glucosides, phenol-glucosides and isoflavone glucoside (daidzin), but not toward 4-coumaroyl glucoside, kaempferol 3,7-O-diglucoside, salicylic acid glucoside and phlorizin. In vivo, seems to be involved in the malonylation of 2-Naphthol glucoside while PMAT2 would be involved in the malonylation of 4-methylumbelliferone glucoside or 4-nitrophenyl glucoside. This chain is Phenolic glucoside malonyltransferase 1 (PMAT1), found in Arabidopsis thaliana (Mouse-ear cress).